Here is a 553-residue protein sequence, read N- to C-terminus: MEDIMTSLLVATSRVVVTISLAYVPVKSAFAAPQNAAGLCSAIAASSIPASRISLPTTGAKIQSATLIGGSDPANQNGEYCKVIGQIKPVDPKAPDIIWQVNLPSVWNGKMLQYGGGGYNGSIPPTTDKTTLGLDVVPTPLTQGYVTFGSDSGHQAPNADDASFAKNDEAMLNYGYMHIKKVLDVAKVLVTERYEKPVTRVYFQGGSTGGREGLTAASRWPESYDGILTNYPTANFVGLRLWGAGLARAVYDDKSAGWIPPKLVERISKEALKSCDGLDGVEDGLVGNMQQCRAQSAVLVQSLACKSDVTGNPDDCLTQAQIERTLKIYHEGYSLPYQLANGINTYPGYNSLEGIMMQLGSEPQMRTPPVSGPNAHHSSRSFEFLQNFVQRDQPLNLLSFDIREPGKLKDRIVELSDVIGATRTDWSTFSDRGGKIIWLQGNDDPSVSPLGNAKLFESIVAKMGADKVKGFMRFFLVPGLAHGGGRFSPTWDNLAALDNWVEHDVPPSNPVVVDATKSSTKGRSRPLCEYPSWPKYKGDGDVAIASSFSCADD.

Residues 1–31 (MEDIMTSLLVATSRVVVTISLAYVPVKSAFA) form the signal peptide. S207 serves as the catalytic Acyl-ester intermediate. A disulfide bridge links C275 with C292. Ca(2+)-binding residues include D276, D279, V281, D283, and L285. Catalysis depends on charge relay system residues D444 and H482. A disulfide bond links C528 and C550.

The protein belongs to the tannase family.

This is an uncharacterized protein from Agrobacterium fabrum (strain C58 / ATCC 33970) (Agrobacterium tumefaciens (strain C58)).